The sequence spans 481 residues: Probable glycine dehydrogenase (decarboxylating) subunit 2 (481 aa).

Position 269 is an N6-(pyridoxal phosphate)lysine (Lys269).

This sequence belongs to the GcvP family. C-terminal subunit subfamily. In terms of assembly, the glycine cleavage system is composed of four proteins: P, T, L and H. In this organism, the P 'protein' is a heterodimer of two subunits. The cofactor is pyridoxal 5'-phosphate.

The catalysed reaction is N(6)-[(R)-lipoyl]-L-lysyl-[glycine-cleavage complex H protein] + glycine + H(+) = N(6)-[(R)-S(8)-aminomethyldihydrolipoyl]-L-lysyl-[glycine-cleavage complex H protein] + CO2. In terms of biological role, the glycine cleavage system catalyzes the degradation of glycine. The P protein binds the alpha-amino group of glycine through its pyridoxal phosphate cofactor; CO(2) is released and the remaining methylamine moiety is then transferred to the lipoamide cofactor of the H protein. The protein is Probable glycine dehydrogenase (decarboxylating) subunit 2 of Chlorobium chlorochromatii (strain CaD3).